The following is a 333-amino-acid chain: Galactinol synthase 1 (333 aa).

The active site involves K104. Positions 120, 122, and 257 each coordinate Mn(2+).

This sequence belongs to the glycosyltransferase 8 family. Galactosyltransferase subfamily. A divalent metal cation serves as cofactor. In terms of tissue distribution, expressed in source leaves, specifically in the mesophyll.

The protein resides in the cytoplasm. It carries out the reaction myo-inositol + UDP-alpha-D-galactose = alpha-D-galactosyl-(1-&gt;3)-1D-myo-inositol + UDP + H(+). Its function is as follows. Major galactinol synthase mainly involved in the biosynthesis of storage raffinose family oligosaccharides (RFOs) that function as osmoprotectants. May promote plant stress tolerance. The sequence is that of Galactinol synthase 1 (GOLS1) from Ajuga reptans (Bugle).